A 623-amino-acid chain; its full sequence is DELLA protein RHT-1 (623 aa).

The disordered stretch occupies residues M1–V27. Positions G9 to G19 are enriched in gly residues. The short motif at D38–A42 is the DELLA motif element. Disordered regions lie at residues L109–D138 and A159–S201. Over residues A111–P120 the composition is skewed to pro residues. 2 stretches are compositionally biased toward low complexity: residues Q121 to T131 and G181 to S201. The 395-residue stretch at V225–R619 folds into the GRAS domain. Residues I232–R288 are leucine repeat I (LRI). Positions L239–E243 match the LxCxE motif motif. The segment at H307–G372 is VHIID. The VHIID signature appears at V338–D342. The segment at Q386–E425 is leucine repeat II (LRII). The interval I435–N540 is PFYRE. Residues A543–R619 are SAW.

Belongs to the GRAS family. DELLA subfamily. In terms of processing, phosphorylated. Ubiquitinated. Upon GA application it is ubiquitinated, leading to its subsequent degradation.

It is found in the nucleus. Probable transcriptional regulator that acts as a repressor of the gibberellin (GA) signaling pathway. Probably acts by participating in large multiprotein complexes that repress transcription of GA-inducible genes. Upon GA application, it is degraded by the proteasome, allowing the GA signaling pathway. The protein is DELLA protein RHT-1 (RHT1) of Triticum aestivum (Wheat).